The following is a 232-amino-acid chain: MKIGIIGAINQETERLKKIIHFYIEKKINTYKIYIGKFKSHDVFLIKSGIGKVSASVATMILIDLYKPDTIINSGSAGSLQSFLKIGDIIIPKKTCYYDVDLTNFGYTRGQIPGYPKEFTVNEKICNFFKKNADKYQLKYIKGLILSGDTFVRENESIKILKKQFPSAIAVEMESSAIAQVCYKFNIPLIIIKSISDESDNNATVNFKENIDFVSYQLSKFVKIILENLIDM.

Glutamate 12 functions as the Proton acceptor in the catalytic mechanism. Substrate-binding positions include glycine 78, valine 152, and 173–174; that span reads ME. Aspartate 197 serves as the catalytic Proton donor.

The protein belongs to the PNP/UDP phosphorylase family. MtnN subfamily. Homodimer.

The enzyme catalyses S-adenosyl-L-homocysteine + H2O = S-(5-deoxy-D-ribos-5-yl)-L-homocysteine + adenine. The catalysed reaction is S-methyl-5'-thioadenosine + H2O = 5-(methylsulfanyl)-D-ribose + adenine. It carries out the reaction 5'-deoxyadenosine + H2O = 5-deoxy-D-ribose + adenine. Its pathway is amino-acid biosynthesis; L-methionine biosynthesis via salvage pathway; S-methyl-5-thio-alpha-D-ribose 1-phosphate from S-methyl-5'-thioadenosine (hydrolase route): step 1/2. Functionally, catalyzes the irreversible cleavage of the glycosidic bond in both 5'-methylthioadenosine (MTA) and S-adenosylhomocysteine (SAH/AdoHcy) to adenine and the corresponding thioribose, 5'-methylthioribose and S-ribosylhomocysteine, respectively. Also cleaves 5'-deoxyadenosine, a toxic by-product of radical S-adenosylmethionine (SAM) enzymes, into 5-deoxyribose and adenine. Thus, is required for in vivo function of the radical SAM enzymes biotin synthase and lipoic acid synthase, that are inhibited by 5'-deoxyadenosine accumulation. The polypeptide is 5'-methylthioadenosine/S-adenosylhomocysteine nucleosidase (Buchnera aphidicola subsp. Acyrthosiphon pisum (strain APS) (Acyrthosiphon pisum symbiotic bacterium)).